The chain runs to 341 residues: Solute carrier family 25 member 43 (341 aa).

Solcar repeat units lie at residues 11–101 (TGGQ…TDDL), 105–185 (SQWS…LLVY), and 200–298 (SLPQ…LYQN). The next 6 helical transmembrane spans lie at 16–36 (LLCAGLAGTLSLSLTAPLELA), 68–88 (LWKGNAVACLRLFPCSAVQLA), 110–130 (IMAGSLAGMVSTIVTYPTDLI), 166–186 (GVSLTVVGALPFSAGSLLVYM), 205–225 (FANVCLAAAVTQTLSFPFETV), and 262–282 (VLGLWNGLTANLLKIVPYFGI).

It belongs to the mitochondrial carrier (TC 2.A.29) family.

It localises to the mitochondrion inner membrane. This chain is Solute carrier family 25 member 43 (SLC25A43), found in Homo sapiens (Human).